The primary structure comprises 459 residues: tRNA modification GTPase MnmE (459 aa).

(6S)-5-formyl-5,6,7,8-tetrahydrofolate-binding residues include Arg23, Glu88, and Arg127. A TrmE-type G domain is found at 223–381 (GLNTVIIGKP…LKDTIENMFA (159 aa)). Asn233 is a binding site for K(+). GTP contacts are provided by residues 233–238 (NVGKSS), 252–258 (TDIPGTT), and 277–280 (DTAG). Ser237 serves as a coordination point for Mg(2+). Residues Thr252, Ile254, and Thr257 each coordinate K(+). Thr258 contributes to the Mg(2+) binding site. Lys459 contacts (6S)-5-formyl-5,6,7,8-tetrahydrofolate.

The protein belongs to the TRAFAC class TrmE-Era-EngA-EngB-Septin-like GTPase superfamily. TrmE GTPase family. Homodimer. Heterotetramer of two MnmE and two MnmG subunits. K(+) is required as a cofactor.

The protein resides in the cytoplasm. In terms of biological role, exhibits a very high intrinsic GTPase hydrolysis rate. Involved in the addition of a carboxymethylaminomethyl (cmnm) group at the wobble position (U34) of certain tRNAs, forming tRNA-cmnm(5)s(2)U34. The chain is tRNA modification GTPase MnmE from Clostridium acetobutylicum (strain ATCC 824 / DSM 792 / JCM 1419 / IAM 19013 / LMG 5710 / NBRC 13948 / NRRL B-527 / VKM B-1787 / 2291 / W).